The primary structure comprises 141 residues: Large ribosomal subunit protein uL11 (141 aa).

The protein belongs to the universal ribosomal protein uL11 family. Part of the ribosomal stalk of the 50S ribosomal subunit. Interacts with L10 and the large rRNA to form the base of the stalk. L10 forms an elongated spine to which L12 dimers bind in a sequential fashion forming a multimeric L10(L12)X complex. In terms of processing, one or more lysine residues are methylated.

Its function is as follows. Forms part of the ribosomal stalk which helps the ribosome interact with GTP-bound translation factors. The sequence is that of Large ribosomal subunit protein uL11 from Thermotoga petrophila (strain ATCC BAA-488 / DSM 13995 / JCM 10881 / RKU-1).